The chain runs to 439 residues: Trigger factor (439 aa).

One can recognise a PPIase FKBP-type domain in the interval 162–247; that stretch reads GDRLTLDFIG…LKKVEAMILP (86 aa).

Belongs to the FKBP-type PPIase family. Tig subfamily.

The protein resides in the cytoplasm. It catalyses the reaction [protein]-peptidylproline (omega=180) = [protein]-peptidylproline (omega=0). Its function is as follows. Involved in protein export. Acts as a chaperone by maintaining the newly synthesized protein in an open conformation. Functions as a peptidyl-prolyl cis-trans isomerase. In Dichelobacter nodosus (strain VCS1703A), this protein is Trigger factor.